The primary structure comprises 451 residues: Tubulin alpha-3 chain (451 aa).

Gln-11 contacts GTP. Lys-40 bears the N6-acetyllysine mark. GTP is bound by residues Glu-71, Ser-140, Gly-144, Thr-145, Thr-179, Asn-206, and Asn-228. Mg(2+) is bound at residue Glu-71. Glu-254 is a catalytic residue.

This sequence belongs to the tubulin family. Dimer of alpha and beta chains. A typical microtubule is a hollow water-filled tube with an outer diameter of 25 nm and an inner diameter of 15 nM. Alpha-beta heterodimers associate head-to-tail to form protofilaments running lengthwise along the microtubule wall with the beta-tubulin subunit facing the microtubule plus end conferring a structural polarity. Microtubules usually have 13 protofilaments but different protofilament numbers can be found in some organisms and specialized cells. It depends on Mg(2+) as a cofactor. Post-translationally, undergoes a tyrosination/detyrosination cycle, the cyclic removal and re-addition of a C-terminal tyrosine residue by the enzymes tubulin tyrosine carboxypeptidase (TTCP) and tubulin tyrosine ligase (TTL), respectively. In terms of processing, acetylation of alpha chains at Lys-40 stabilizes microtubules and affects affinity and processivity of microtubule motors. This modification has a role in multiple cellular functions, ranging from cell motility, cell cycle progression or cell differentiation to intracellular trafficking and signaling.

It is found in the cytoplasm. It localises to the cytoskeleton. The enzyme catalyses GTP + H2O = GDP + phosphate + H(+). Its function is as follows. Tubulin is the major constituent of microtubules, a cylinder consisting of laterally associated linear protofilaments composed of alpha- and beta-tubulin heterodimers. Microtubules grow by the addition of GTP-tubulin dimers to the microtubule end, where a stabilizing cap forms. Below the cap, tubulin dimers are in GDP-bound state, owing to GTPase activity of alpha-tubulin. The sequence is that of Tubulin alpha-3 chain from Homarus americanus (American lobster).